The chain runs to 227 residues: Cytochrome c oxidase subunit 2 (227 aa).

The Mitochondrial intermembrane segment spans residues 1 to 14 (MAHAAQMGLQDATS). Residues 15–45 (PIMEELISFHDHALMIIFLISFLVLYALFLT) form a helical membrane-spanning segment. At 46–59 (LTTKLTNTNITDAQ) the chain is on the mitochondrial matrix side. The chain crosses the membrane as a helical span at residues 60 to 87 (EMETVWTILPAIILVLIALPSLRILYLT). Residues 88-227 (DEINDPSFTI…IFEMGPVFTL (140 aa)) are Mitochondrial intermembrane-facing. H161, C196, E198, C200, H204, and M207 together coordinate Cu cation. Position 198 (E198) interacts with Mg(2+).

Belongs to the cytochrome c oxidase subunit 2 family. Component of the cytochrome c oxidase (complex IV, CIV), a multisubunit enzyme composed of 14 subunits. The complex is composed of a catalytic core of 3 subunits MT-CO1, MT-CO2 and MT-CO3, encoded in the mitochondrial DNA, and 11 supernumerary subunits COX4I, COX5A, COX5B, COX6A, COX6B, COX6C, COX7A, COX7B, COX7C, COX8 and NDUFA4, which are encoded in the nuclear genome. The complex exists as a monomer or a dimer and forms supercomplexes (SCs) in the inner mitochondrial membrane with NADH-ubiquinone oxidoreductase (complex I, CI) and ubiquinol-cytochrome c oxidoreductase (cytochrome b-c1 complex, complex III, CIII), resulting in different assemblies (supercomplex SCI(1)III(2)IV(1) and megacomplex MCI(2)III(2)IV(2)). Found in a complex with TMEM177, COA6, COX18, COX20, SCO1 and SCO2. Interacts with TMEM177 in a COX20-dependent manner. Interacts with COX20. Interacts with COX16. The cofactor is Cu cation.

It is found in the mitochondrion inner membrane. The catalysed reaction is 4 Fe(II)-[cytochrome c] + O2 + 8 H(+)(in) = 4 Fe(III)-[cytochrome c] + 2 H2O + 4 H(+)(out). In terms of biological role, component of the cytochrome c oxidase, the last enzyme in the mitochondrial electron transport chain which drives oxidative phosphorylation. The respiratory chain contains 3 multisubunit complexes succinate dehydrogenase (complex II, CII), ubiquinol-cytochrome c oxidoreductase (cytochrome b-c1 complex, complex III, CIII) and cytochrome c oxidase (complex IV, CIV), that cooperate to transfer electrons derived from NADH and succinate to molecular oxygen, creating an electrochemical gradient over the inner membrane that drives transmembrane transport and the ATP synthase. Cytochrome c oxidase is the component of the respiratory chain that catalyzes the reduction of oxygen to water. Electrons originating from reduced cytochrome c in the intermembrane space (IMS) are transferred via the dinuclear copper A center (CU(A)) of subunit 2 and heme A of subunit 1 to the active site in subunit 1, a binuclear center (BNC) formed by heme A3 and copper B (CU(B)). The BNC reduces molecular oxygen to 2 water molecules using 4 electrons from cytochrome c in the IMS and 4 protons from the mitochondrial matrix. In Symphalangus syndactylus (Siamang), this protein is Cytochrome c oxidase subunit 2 (MT-CO2).